The following is a 358-amino-acid chain: NADH-quinone oxidoreductase subunit H (358 aa).

Helical transmembrane passes span 20-40 (ITVG…IPLI), 95-115 (ALFY…WAVI), 128-148 (IGLL…IIAG), 168-188 (ISYE…SGSM), 206-226 (VFSW…ISAV), 253-273 (GFAF…IAAL), 295-315 (TPSA…YLWI), and 334-354 (VLIP…ISPL).

It belongs to the complex I subunit 1 family. In terms of assembly, NDH-1 is composed of 14 different subunits. Subunits NuoA, H, J, K, L, M, N constitute the membrane sector of the complex.

It is found in the cell inner membrane. The catalysed reaction is a quinone + NADH + 5 H(+)(in) = a quinol + NAD(+) + 4 H(+)(out). In terms of biological role, NDH-1 shuttles electrons from NADH, via FMN and iron-sulfur (Fe-S) centers, to quinones in the respiratory chain. The immediate electron acceptor for the enzyme in this species is believed to be ubiquinone. Couples the redox reaction to proton translocation (for every two electrons transferred, four hydrogen ions are translocated across the cytoplasmic membrane), and thus conserves the redox energy in a proton gradient. This subunit may bind ubiquinone. This chain is NADH-quinone oxidoreductase subunit H, found in Neisseria meningitidis serogroup B (strain ATCC BAA-335 / MC58).